We begin with the raw amino-acid sequence, 197 residues long: Prefoldin subunit 3 (197 aa).

Ala2 is subject to N-acetylalanine. At Lys59 the chain carries N6-acetyllysine.

Belongs to the prefoldin subunit alpha family. Heterohexamer of two PFD-alpha type and four PFD-beta type subunits. Binds to the C-terminal part of VHL. As to expression, ubiquitous.

The protein resides in the cytoplasm. It is found in the nucleus. Functionally, binds specifically to cytosolic chaperonin (c-CPN) and transfers target proteins to it. Binds to nascent polypeptide chain and promotes folding in an environment in which there are many competing pathways for nonnative proteins. The sequence is that of Prefoldin subunit 3 (VBP1) from Homo sapiens (Human).